A 542-amino-acid polypeptide reads, in one-letter code: Chaperonin GroEL 2 (542 aa).

ATP-binding positions include 30–33 (TLGP), K51, 87–91 (DGTTT), G415, and D494.

Belongs to the chaperonin (HSP60) family. As to quaternary structure, forms a cylinder of 14 subunits composed of two heptameric rings stacked back-to-back. Interacts with the co-chaperonin GroES.

The protein resides in the cytoplasm. It carries out the reaction ATP + H2O + a folded polypeptide = ADP + phosphate + an unfolded polypeptide.. In terms of biological role, together with its co-chaperonin GroES, plays an essential role in assisting protein folding. The GroEL-GroES system forms a nano-cage that allows encapsulation of the non-native substrate proteins and provides a physical environment optimized to promote and accelerate protein folding. The chain is Chaperonin GroEL 2 from Syntrophobacter fumaroxidans (strain DSM 10017 / MPOB).